Reading from the N-terminus, the 170-residue chain is CCHC-type zinc finger nucleic acid binding protein (170 aa).

At Ser2 the chain carries N-acetylserine. A CCHC-type 1 zinc finger spans residues 4 to 21 (NECFKCGRSGHWARECPT). N6-acetyllysine is present on Lys8. Residues Arg25 and Arg27 each carry the omega-N-methylarginine; by PRMT1 modification. The RNA-binding Arg/Gly-rich region (RGG-box) stretch occupies residues 25–33 (RGRGMRSRG). Residue Ser42 is modified to Phosphoserine. 6 CCHC-type zinc fingers span residues 45–62 (DICYRCGESGHLAKDCDL), 65–82 (DACYNCGRGGHIAKDCKE), 89–106 (QCCYNCGKPGHLARDCDH), 110–127 (QKCYSCGEFGHIQKDCTK), 128–145 (VKCYRCGETGHVAINCSK), and 149–166 (VNCYRCGESGHLARECTI). Arg72 carries the post-translational modification Omega-N-methylarginine.

Associates with the 40S ribosomal subunit, the 80S ribosome and with polysomes. Post-translationally, arginine methylation by PRMT1 in the Arg/Gly-rich region impedes RNA binding.

It is found in the nucleus. The protein resides in the cytoplasm. The protein localises to the endoplasmic reticulum. Single-stranded DNA-binding protein that preferentially binds to the sterol regulatory element (SRE) sequence 5'-GTGCGGTG-3', and thereby mediates transcriptional repression. Has a role as transactivator of the Myc promoter. Binds single-stranded RNA in a sequence-specific manner. Binds G-rich elements in target mRNA coding sequences. Prevents G-quadruplex structure formation in vitro, suggesting a role in supporting translation by resolving stable structures on mRNAs. This chain is CCHC-type zinc finger nucleic acid binding protein (CNBP), found in Bos taurus (Bovine).